We begin with the raw amino-acid sequence, 525 residues long: GMP synthase [glutamine-hydrolyzing] (525 aa).

Residues 8–207 enclose the Glutamine amidotransferase type-1 domain; it reads KILILDFGSQ…ALDICGCDAN (200 aa). C85 (nucleophile) is an active-site residue. Active-site residues include H181 and E183. In terms of domain architecture, GMPS ATP-PPase spans 208–400; it reads WKPSSIIEDA…LGLPYDMLYR (193 aa). 235-241 contacts ATP; that stretch reads SGGVDSS.

In terms of assembly, homodimer.

The enzyme catalyses XMP + L-glutamine + ATP + H2O = GMP + L-glutamate + AMP + diphosphate + 2 H(+). The protein operates within purine metabolism; GMP biosynthesis; GMP from XMP (L-Gln route): step 1/1. Functionally, catalyzes the synthesis of GMP from XMP. The polypeptide is GMP synthase [glutamine-hydrolyzing] (Shewanella piezotolerans (strain WP3 / JCM 13877)).